The following is a 700-amino-acid chain: ATP-dependent zinc metalloprotease FtsH (700 aa).

Residues 1 to 10 lie on the Cytoplasmic side of the membrane; that stretch reads MNNNKGGFLR. Residues 11-31 form a helical membrane-spanning segment; it reads SSVFYIFIFLAVVGMVYGLFG. Residues 32–130 are Extracellular-facing; sequence NDKTTTKTIT…LVTKQAENSG (99 aa). A helical transmembrane segment spans residues 131–151; sequence FWLNLLVSLVPVLLIVAVFYL. Residues 152 to 700 lie on the Cytoplasmic side of the membrane; sequence MMNQAGGGKG…ETDDNNTENK (549 aa). ATP is bound at residue 227 to 234; sequence GPPGTGKT. A Zn(2+)-binding site is contributed by His-449. Glu-450 is an active-site residue. Zn(2+)-binding residues include His-453 and Asp-525. Residues 644–700 are disordered; the sequence is KSFEEAKAAADAKDSQAEQRFEKQDEEKSSDDHSESKNEDTDSTDKSETDDNNTENK.

It in the central section; belongs to the AAA ATPase family. In the C-terminal section; belongs to the peptidase M41 family. In terms of assembly, homohexamer. It depends on Zn(2+) as a cofactor.

The protein localises to the cell membrane. Acts as a processive, ATP-dependent zinc metallopeptidase for both cytoplasmic and membrane proteins. Plays a role in the quality control of integral membrane proteins. The chain is ATP-dependent zinc metalloprotease FtsH from Leuconostoc mesenteroides subsp. mesenteroides (strain ATCC 8293 / DSM 20343 / BCRC 11652 / CCM 1803 / JCM 6124 / NCDO 523 / NBRC 100496 / NCIMB 8023 / NCTC 12954 / NRRL B-1118 / 37Y).